A 305-amino-acid polypeptide reads, in one-letter code: Homoserine O-acetyltransferase (305 aa).

The Acyl-thioester intermediate role is filled by cysteine 142. Lysine 163 and serine 192 together coordinate substrate. Histidine 235 functions as the Proton acceptor in the catalytic mechanism. Glutamate 237 is a catalytic residue. Arginine 249 provides a ligand contact to substrate.

The protein belongs to the MetA family.

The protein resides in the cytoplasm. The enzyme catalyses L-homoserine + acetyl-CoA = O-acetyl-L-homoserine + CoA. It functions in the pathway amino-acid biosynthesis; L-methionine biosynthesis via de novo pathway; O-acetyl-L-homoserine from L-homoserine: step 1/1. Transfers an acetyl group from acetyl-CoA to L-homoserine, forming acetyl-L-homoserine. This Hyphomonas neptunium (strain ATCC 15444) protein is Homoserine O-acetyltransferase.